We begin with the raw amino-acid sequence, 163 residues long: MRALYPGSFDPLTNGHMDLIERAVALFGQVTVAVLSNPNKKPAFSVDQRIGQIQCATRHLNGIDVVSFDGLTVHCAVTHQADLILRGLRAMSDFEYELQIAHTNRSLAEDLETVFLATSTRHSFLSSSVVKEVARFGGPVDHMVPKEVAKDLNRLFNSTFPPR.

Ser8 serves as a coordination point for substrate. Residues 8 to 9 and His16 contribute to the ATP site; that span reads SF. Substrate is bound by residues Lys40, Thr72, and Arg86. ATP is bound by residues 87–89, Glu97, and 122–128; these read GLR and HSFLSSS.

It belongs to the bacterial CoaD family. Homohexamer. It depends on Mg(2+) as a cofactor.

The protein resides in the cytoplasm. The enzyme catalyses (R)-4'-phosphopantetheine + ATP + H(+) = 3'-dephospho-CoA + diphosphate. It participates in cofactor biosynthesis; coenzyme A biosynthesis; CoA from (R)-pantothenate: step 4/5. In terms of biological role, reversibly transfers an adenylyl group from ATP to 4'-phosphopantetheine, yielding dephospho-CoA (dPCoA) and pyrophosphate. The polypeptide is Phosphopantetheine adenylyltransferase (Parasynechococcus marenigrum (strain WH8102)).